We begin with the raw amino-acid sequence, 107 residues long: U1-lycotoxin-Ls1b (107 aa).

An N-terminal signal peptide occupies residues Met-1–Ser-20. A propeptide spanning residues Glu-21–Arg-41 is cleaved from the precursor. 4 cysteine pairs are disulfide-bonded: Cys-44–Cys-59, Cys-51–Cys-68, Cys-58–Cys-86, and Cys-70–Cys-84.

The protein belongs to the neurotoxin 19 (CSTX) family. 04 (U1-Lctx) subfamily. As to expression, expressed by the venom gland.

The protein localises to the secreted. This is U1-lycotoxin-Ls1b from Lycosa singoriensis (Wolf spider).